The sequence spans 136 residues: Histone H2B (136 aa).

The span at 1 to 10 (MPPKAADKKP) shows a compositional bias: basic and acidic residues. The tract at residues 1 to 44 (MPPKAADKKPAAKAPVASKAPEKKDAGKKTASTGEKKKRTKARR) is disordered. K8 and K9 each carry N6-acetyllysine; alternate. Glycyl lysine isopeptide (Lys-Gly) (interchain with G-Cter in SUMO); alternate cross-links involve residues K8 and K9. K13 carries the post-translational modification N6-acetyllysine. K23 carries the N6-acetyllysine; alternate modification. A Glycyl lysine isopeptide (Lys-Gly) (interchain with G-Cter in SUMO); alternate cross-link involves residue K23. K24 participates in a covalent cross-link: Glycyl lysine isopeptide (Lys-Gly) (interchain with G-Cter in SUMO). K130 participates in a covalent cross-link: Glycyl lysine isopeptide (Lys-Gly) (interchain with G-Cter in ubiquitin).

This sequence belongs to the histone H2B family. The nucleosome is a histone octamer containing two molecules each of H2A, H2B, H3 and H4 assembled in one H3-H4 heterotetramer and two H2A-H2B heterodimers. The octamer wraps approximately 147 bp of DNA. Monoubiquitinated to form H2BK123ub1. H2BK123ub1 gives a specific tag for epigenetic transcriptional activation and is also prerequisite for H3K4me and H3K79me formation. H2BK123ub1 also modulates the formation of double-strand breaks during meiosis and is a prerequisite for DNA-damage checkpoint activation. In terms of processing, acetylated by GCN5 to form H2BK11ac and H2BK16ac. H2BK16ac can also be formed by ESA1. Acetylation of N-terminal lysines and particularly formation of H2BK11acK16ac has a positive effect on transcription. Post-translationally, sumoylation to form H2BK6su or H2BK7su, and probably also H2BK16su or H2BK17su, occurs preferentially near the telomeres and represses gene transcription.

It localises to the nucleus. Its subcellular location is the chromosome. Core component of nucleosome. Nucleosomes wrap and compact DNA into chromatin, limiting DNA accessibility to the cellular machineries which require DNA as a template. Histones thereby play a central role in transcription regulation, DNA repair, DNA replication and chromosomal stability. DNA accessibility is regulated via a complex set of post-translational modifications of histones, also called histone code, and nucleosome remodeling. The polypeptide is Histone H2B (hh2b) (Rosellinia necatrix (White root-rot fungus)).